We begin with the raw amino-acid sequence, 419 residues long: Serine--tRNA ligase (419 aa).

The interval alanine 45–glutamate 66 is disordered. Residue threonine 226–glutamate 228 coordinates L-serine. ATP is bound by residues arginine 257–glutamate 259 and valine 273. Glutamate 280 serves as a coordination point for L-serine. Glutamate 344–serine 347 is a binding site for ATP. L-serine is bound at residue threonine 379.

Belongs to the class-II aminoacyl-tRNA synthetase family. Type-1 seryl-tRNA synthetase subfamily. As to quaternary structure, homodimer. The tRNA molecule binds across the dimer.

The protein localises to the cytoplasm. It carries out the reaction tRNA(Ser) + L-serine + ATP = L-seryl-tRNA(Ser) + AMP + diphosphate + H(+). The catalysed reaction is tRNA(Sec) + L-serine + ATP = L-seryl-tRNA(Sec) + AMP + diphosphate + H(+). The protein operates within aminoacyl-tRNA biosynthesis; selenocysteinyl-tRNA(Sec) biosynthesis; L-seryl-tRNA(Sec) from L-serine and tRNA(Sec): step 1/1. Functionally, catalyzes the attachment of serine to tRNA(Ser). Is also able to aminoacylate tRNA(Sec) with serine, to form the misacylated tRNA L-seryl-tRNA(Sec), which will be further converted into selenocysteinyl-tRNA(Sec). This chain is Serine--tRNA ligase, found in Mycobacterium ulcerans (strain Agy99).